The sequence spans 270 residues: Allergen Asp f 7 (270 aa).

The first 21 residues, 1-21 (MAPIFKSLALVSALFAAISSA), serve as a signal peptide directing secretion. Disordered regions lie at residues 53-97 (YPTP…QPTQ) and 113-167 (ADSA…GPCS). The segment covering 63-81 (VVESTPTPTPSAAPEQAEP) has biased composition (low complexity). A compositionally biased stretch (polar residues) spans 83 to 97 (ETSTQPETTKSQPTQ). Residues 127-149 (PATTAAPSTSTTTQAAPSAPPAA) show a composition bias toward low complexity. Polar residues predominate over residues 150-162 (NSGSTEKAASSGY).

The chain is Allergen Asp f 7 from Aspergillus fumigatus (strain ATCC MYA-4609 / CBS 101355 / FGSC A1100 / Af293) (Neosartorya fumigata).